Here is a 314-residue protein sequence, read N- to C-terminus: Hydroxyethylthiazole kinase (314 aa).

Methionine 70 is a binding site for substrate. ATP-binding residues include arginine 145 and serine 217. Glycine 244 is a binding site for substrate.

Belongs to the Thz kinase family. It depends on Mg(2+) as a cofactor.

It carries out the reaction 5-(2-hydroxyethyl)-4-methylthiazole + ATP = 4-methyl-5-(2-phosphooxyethyl)-thiazole + ADP + H(+). Its pathway is cofactor biosynthesis; thiamine diphosphate biosynthesis; 4-methyl-5-(2-phosphoethyl)-thiazole from 5-(2-hydroxyethyl)-4-methylthiazole: step 1/1. Functionally, catalyzes the phosphorylation of the hydroxyl group of 4-methyl-5-beta-hydroxyethylthiazole (THZ). This Bifidobacterium longum (strain NCC 2705) protein is Hydroxyethylthiazole kinase.